We begin with the raw amino-acid sequence, 416 residues long: Glutamate dehydrogenase A2 (416 aa).

Lysine 105 is a catalytic residue.

This sequence belongs to the Glu/Leu/Phe/Val dehydrogenases family. As to quaternary structure, homohexamer.

This chain is Glutamate dehydrogenase A2 (gdhA2), found in Halobacterium salinarum (strain ATCC 700922 / JCM 11081 / NRC-1) (Halobacterium halobium).